The chain runs to 50 residues: Photosystem II reaction center protein M (50 aa).

Residues 7-27 (GFIISLLFVGIPTIFLVGLYI) traverse the membrane as a helical segment. A disordered region spans residues 31-50 (DGEKSSFFSDSSKGKLGPKS).

This sequence belongs to the PsbM family. As to quaternary structure, PSII is composed of 1 copy each of membrane proteins PsbA, PsbB, PsbC, PsbD, PsbE, PsbF, PsbH, PsbI, PsbJ, PsbK, PsbL, PsbM, PsbT, PsbX, PsbY, Psb30/Ycf12, peripheral proteins PsbO, CyanoQ (PsbQ), PsbU, PsbV and a large number of cofactors. It forms dimeric complexes.

It localises to the cellular thylakoid membrane. Its function is as follows. One of the components of the core complex of photosystem II (PSII). PSII is a light-driven water:plastoquinone oxidoreductase that uses light energy to abstract electrons from H(2)O, generating O(2) and a proton gradient subsequently used for ATP formation. It consists of a core antenna complex that captures photons, and an electron transfer chain that converts photonic excitation into a charge separation. This subunit is found at the monomer-monomer interface. This Prochlorococcus marinus (strain SARG / CCMP1375 / SS120) protein is Photosystem II reaction center protein M.